Reading from the N-terminus, the 725-residue chain is Endoglucanase G (725 aa).

The signal sequence occupies residues 1 to 35 (MLKTKRKLTKAIGVALSISILSSLVSFIPQTNTYA). Catalysis depends on Asp93, which acts as the Nucleophile. Catalysis depends on residues His408, Asp446, and Glu455. Residues 489–650 (ITNDEVIIKA…GVKVFGNEPA (162 aa)) enclose the CBM3 domain. One can recognise a Dockerin domain in the interval 658-724 (PEILYGDVNS…LLGTITQLPQ (67 aa)).

It belongs to the glycosyl hydrolase 9 (cellulase E) family.

The catalysed reaction is Endohydrolysis of (1-&gt;4)-beta-D-glucosidic linkages in cellulose, lichenin and cereal beta-D-glucans.. It participates in glycan metabolism; cellulose degradation. The biological conversion of cellulose to glucose generally requires three types of hydrolytic enzymes: (1) Endoglucanases which cut internal beta-1,4-glucosidic bonds; (2) Exocellobiohydrolases that cut the disaccharide cellobiose from the non-reducing end of the cellulose polymer chain; (3) Beta-1,4-glucosidases which hydrolyze the cellobiose and other short cello-oligosaccharides to glucose. The protein is Endoglucanase G (celCCG) of Ruminiclostridium cellulolyticum (strain ATCC 35319 / DSM 5812 / JCM 6584 / H10) (Clostridium cellulolyticum).